Reading from the N-terminus, the 858-residue chain is Bifunctional uridylyltransferase/uridylyl-removing enzyme (858 aa).

Positions 1–324 (MSASVAAPPP…PATSGVTRVL (324 aa)) are uridylyltransferase. The interval 325–681 (SPGRFVEKQG…ARPSPVGDAL (357 aa)) is uridylyl-removing. The region spanning 443-565 (VDQHILMVLR…VGNERRLTAL (123 aa)) is the HD domain. ACT domains lie at 682–761 (QVLV…PEPS) and 790–858 (ILSV…AIAV).

Belongs to the GlnD family. The cofactor is Mg(2+).

The enzyme catalyses [protein-PII]-L-tyrosine + UTP = [protein-PII]-uridylyl-L-tyrosine + diphosphate. It catalyses the reaction [protein-PII]-uridylyl-L-tyrosine + H2O = [protein-PII]-L-tyrosine + UMP + H(+). Uridylyltransferase (UTase) activity is inhibited by glutamine, while glutamine activates uridylyl-removing (UR) activity. Its function is as follows. Modifies, by uridylylation and deuridylylation, the PII regulatory proteins (GlnB and homologs), in response to the nitrogen status of the cell that GlnD senses through the glutamine level. Under low glutamine levels, catalyzes the conversion of the PII proteins and UTP to PII-UMP and PPi, while under higher glutamine levels, GlnD hydrolyzes PII-UMP to PII and UMP (deuridylylation). Thus, controls uridylylation state and activity of the PII proteins, and plays an important role in the regulation of nitrogen assimilation and metabolism. In Burkholderia thailandensis (strain ATCC 700388 / DSM 13276 / CCUG 48851 / CIP 106301 / E264), this protein is Bifunctional uridylyltransferase/uridylyl-removing enzyme.